We begin with the raw amino-acid sequence, 481 residues long: Aspartyl/glutamyl-tRNA(Asn/Gln) amidotransferase subunit B (481 aa).

The protein belongs to the GatB/GatE family. GatB subfamily. As to quaternary structure, heterotrimer of A, B and C subunits.

It carries out the reaction L-glutamyl-tRNA(Gln) + L-glutamine + ATP + H2O = L-glutaminyl-tRNA(Gln) + L-glutamate + ADP + phosphate + H(+). The catalysed reaction is L-aspartyl-tRNA(Asn) + L-glutamine + ATP + H2O = L-asparaginyl-tRNA(Asn) + L-glutamate + ADP + phosphate + 2 H(+). In terms of biological role, allows the formation of correctly charged Asn-tRNA(Asn) or Gln-tRNA(Gln) through the transamidation of misacylated Asp-tRNA(Asn) or Glu-tRNA(Gln) in organisms which lack either or both of asparaginyl-tRNA or glutaminyl-tRNA synthetases. The reaction takes place in the presence of glutamine and ATP through an activated phospho-Asp-tRNA(Asn) or phospho-Glu-tRNA(Gln). The chain is Aspartyl/glutamyl-tRNA(Asn/Gln) amidotransferase subunit B from Prosthecochloris aestuarii (strain DSM 271 / SK 413).